Reading from the N-terminus, the 146-residue chain is Large-conductance mechanosensitive channel (146 aa).

The next 2 membrane-spanning stretches (helical) occupy residues 15 to 35 (VSLAIGVVIGGAFSKIVTSLV) and 81 to 101 (GIFINNIIDFLIVAFSIFIII).

The protein belongs to the MscL family. Homopentamer.

The protein localises to the cell membrane. In terms of biological role, channel that opens in response to stretch forces in the membrane lipid bilayer. May participate in the regulation of osmotic pressure changes within the cell. This Clostridium beijerinckii (strain ATCC 51743 / NCIMB 8052) (Clostridium acetobutylicum) protein is Large-conductance mechanosensitive channel.